We begin with the raw amino-acid sequence, 377 residues long: Proteinase-activated receptor 3 (377 aa).

A signal peptide spans 1 to 19 (MRAAIFAAIGALLLSPASC). A propeptide spans 20–38 (QSGMEYDADNLAKPTLSIK) (removed for receptor activation). The Extracellular portion of the chain corresponds to 39–94 (TFRGAPQNSFEEFPLSAIEGWTGTTKTVKIKCPEELDSNLHVNNATMGYLSSPLST). Asn82 carries N-linked (GlcNAc...) asparagine glycosylation. Residues 95-120 (KLIPAIYILVFAVGMPANAVTLWMLF) traverse the membrane as a helical segment. The Cytoplasmic portion of the chain corresponds to 121-127 (RTRTIRM). Residues 128 to 147 (TIFYTNLAIADFLFCVTLPF) form a helical membrane-spanning segment. At 148-166 (RIAYHLNGNNWVFGEVMCR) the chain is on the extracellular side. Cys165 and Cys244 are disulfide-bonded. A helical membrane pass occupies residues 167–188 (ATTVIFYGNMYCSILLLACISI). Residues 189 to 205 (NRYLAIVHPFTYRGLPK) lie on the Cytoplasmic side of the membrane. Residues 206-229 (RTYALLTCGLVWTTVFLYMLPFFI) traverse the membrane as a helical segment. Topologically, residues 230 to 259 (LKQEYYLVQQDITTCHDVHNTCESSSPFQL) are extracellular. A helical transmembrane segment spans residues 260–279 (YYFISLAFFGFLIPFLVIIY). Topologically, residues 280 to 296 (CYTAIIWTLNAKDRRWL) are cytoplasmic. Residues 297-321 (WYIKASLLTFVIFTICFAPSNIILI) form a helical membrane-spanning segment. Topologically, residues 322–335 (IHHANYYYSNTDAL) are extracellular. The helical transmembrane segment at 336 to 360 (YFVYLIALCLGSLNSCLDPFLYFLM) threads the bilayer. Residues 361–377 (SKITDHSTAYLTMVKLS) are Cytoplasmic-facing.

It belongs to the G-protein coupled receptor 1 family. In terms of assembly, interacts with INSC/inscuteable and GPSM2. Post-translationally, a proteolytic cleavage generates a new N-terminus that functions as a tethered ligand.

The protein localises to the cell membrane. Functionally, receptor for activated thrombin coupled to G proteins that stimulate phosphoinositide hydrolysis. This is Proteinase-activated receptor 3 (F2RL2) from Bos taurus (Bovine).